A 381-amino-acid polypeptide reads, in one-letter code: MSSNIKLAQKDYKGDKEFAAALHGKEGHKKHGLGAVMSKNKDAQAAAVEGFFRNWGDKDRSKIEDADEQGRIEDYAGLTKHYYNLVTDFYEYGWGSSFHFSRYYKGEAFRQATARHEHYLAYKMGIQPGMKVLDVGCGVGGPAREIARFTGANIVGLNNNDYQVERGTHYSEVQGFGDQVTYVKGDFMQMDFPDNSFDAVYAIEATVHAPVLEGVYSEIFRVLKPGGVFGVYEWVMTDEYDESNPEHRDICYGIEKGDGIPKMYKREVAVKALENVGFDIEYQEDLAADDAEVPWYYPLAGEWKYVQSLNDIVTIGRTSRLGRMVTMNVIGALEKIGLAPQGSRQVTEALEDAAVNLVAGGKKKLFTPMMLFVSRKPEDKN.

The protein belongs to the class I-like SAM-binding methyltransferase superfamily. Erg6/SMT family.

The enzyme catalyses zymosterol + S-adenosyl-L-methionine = fecosterol + S-adenosyl-L-homocysteine + H(+). Its pathway is steroid metabolism; ergosterol biosynthesis; ergosterol from zymosterol: step 1/5. Its function is as follows. Catalyzes the methyl transfer from S-adenosyl-methionine to the C-24 of zymosterol to form fecosterol. In Yarrowia lipolytica (strain CLIB 122 / E 150) (Yeast), this protein is Sterol 24-C-methyltransferase (ERG6).